The following is a 130-amino-acid chain: Small ribosomal subunit protein uS8 (130 aa).

The protein belongs to the universal ribosomal protein uS8 family. As to quaternary structure, part of the 30S ribosomal subunit. Contacts proteins S5 and S12.

Its function is as follows. One of the primary rRNA binding proteins, it binds directly to 16S rRNA central domain where it helps coordinate assembly of the platform of the 30S subunit. The chain is Small ribosomal subunit protein uS8 from Pseudomonas entomophila (strain L48).